The primary structure comprises 245 residues: tRNA pseudouridine synthase A (245 aa).

Aspartate 52 serves as the catalytic Nucleophile. A substrate-binding site is contributed by tyrosine 111.

The protein belongs to the tRNA pseudouridine synthase TruA family. As to quaternary structure, homodimer.

It catalyses the reaction uridine(38/39/40) in tRNA = pseudouridine(38/39/40) in tRNA. Formation of pseudouridine at positions 38, 39 and 40 in the anticodon stem and loop of transfer RNAs. The sequence is that of tRNA pseudouridine synthase A from Rickettsia prowazekii (strain Madrid E).